Reading from the N-terminus, the 251-residue chain is Ubiquinone/menaquinone biosynthesis C-methyltransferase UbiE (251 aa).

Residues T74, D95, 123–124 (NA), and S140 each bind S-adenosyl-L-methionine.

This sequence belongs to the class I-like SAM-binding methyltransferase superfamily. MenG/UbiE family.

It catalyses the reaction a 2-demethylmenaquinol + S-adenosyl-L-methionine = a menaquinol + S-adenosyl-L-homocysteine + H(+). The catalysed reaction is a 2-methoxy-6-(all-trans-polyprenyl)benzene-1,4-diol + S-adenosyl-L-methionine = a 5-methoxy-2-methyl-3-(all-trans-polyprenyl)benzene-1,4-diol + S-adenosyl-L-homocysteine + H(+). It functions in the pathway quinol/quinone metabolism; menaquinone biosynthesis; menaquinol from 1,4-dihydroxy-2-naphthoate: step 2/2. Its pathway is cofactor biosynthesis; ubiquinone biosynthesis. Methyltransferase required for the conversion of demethylmenaquinol (DMKH2) to menaquinol (MKH2) and the conversion of 2-polyprenyl-6-methoxy-1,4-benzoquinol (DDMQH2) to 2-polyprenyl-3-methyl-6-methoxy-1,4-benzoquinol (DMQH2). In Yersinia enterocolitica serotype O:8 / biotype 1B (strain NCTC 13174 / 8081), this protein is Ubiquinone/menaquinone biosynthesis C-methyltransferase UbiE.